A 377-amino-acid polypeptide reads, in one-letter code: Phospho-N-acetylmuramoyl-pentapeptide-transferase (377 aa).

The next 10 helical transmembrane spans lie at T27 to E47, G71 to W91, L94 to F114, I139 to S159, V182 to V202, G216 to S236, M252 to W272, I280 to V300, L305 to V325, and K354 to L374.

This sequence belongs to the glycosyltransferase 4 family. MraY subfamily. Mg(2+) serves as cofactor.

The protein localises to the cell inner membrane. The enzyme catalyses UDP-N-acetyl-alpha-D-muramoyl-L-alanyl-gamma-D-glutamyl-meso-2,6-diaminopimeloyl-D-alanyl-D-alanine + di-trans,octa-cis-undecaprenyl phosphate = di-trans,octa-cis-undecaprenyl diphospho-N-acetyl-alpha-D-muramoyl-L-alanyl-D-glutamyl-meso-2,6-diaminopimeloyl-D-alanyl-D-alanine + UMP. Its pathway is cell wall biogenesis; peptidoglycan biosynthesis. Catalyzes the initial step of the lipid cycle reactions in the biosynthesis of the cell wall peptidoglycan: transfers peptidoglycan precursor phospho-MurNAc-pentapeptide from UDP-MurNAc-pentapeptide onto the lipid carrier undecaprenyl phosphate, yielding undecaprenyl-pyrophosphoryl-MurNAc-pentapeptide, known as lipid I. The polypeptide is Phospho-N-acetylmuramoyl-pentapeptide-transferase (Acidobacterium capsulatum (strain ATCC 51196 / DSM 11244 / BCRC 80197 / JCM 7670 / NBRC 15755 / NCIMB 13165 / 161)).